A 488-amino-acid chain; its full sequence is N-succinylglutamate 5-semialdehyde dehydrogenase 2 (488 aa).

221–226 (GSSNTG) is a binding site for NAD(+). Active-site residues include Glu-244 and Cys-278.

It belongs to the aldehyde dehydrogenase family. AstD subfamily.

The catalysed reaction is N-succinyl-L-glutamate 5-semialdehyde + NAD(+) + H2O = N-succinyl-L-glutamate + NADH + 2 H(+). It functions in the pathway amino-acid degradation; L-arginine degradation via AST pathway; L-glutamate and succinate from L-arginine: step 4/5. In terms of biological role, catalyzes the NAD-dependent reduction of succinylglutamate semialdehyde into succinylglutamate. This is N-succinylglutamate 5-semialdehyde dehydrogenase 2 from Pseudoalteromonas translucida (strain TAC 125).